We begin with the raw amino-acid sequence, 114 residues long: Ribonuclease P protein component (114 aa).

This sequence belongs to the RnpA family. In terms of assembly, consists of a catalytic RNA component (M1 or rnpB) and a protein subunit.

The catalysed reaction is Endonucleolytic cleavage of RNA, removing 5'-extranucleotides from tRNA precursor.. In terms of biological role, RNaseP catalyzes the removal of the 5'-leader sequence from pre-tRNA to produce the mature 5'-terminus. It can also cleave other RNA substrates such as 4.5S RNA. The protein component plays an auxiliary but essential role in vivo by binding to the 5'-leader sequence and broadening the substrate specificity of the ribozyme. This Borrelia hermsii (strain HS1 / DAH) protein is Ribonuclease P protein component.